A 250-amino-acid polypeptide reads, in one-letter code: Dimethyl sulfide dehydrogenase assembly chaperone protein (250 aa).

A disordered region spans residues 231–250 (SAEARSDSAPDAAAHQNLWG).

It belongs to the type II DMSO reductase enzyme chaperone family.

Its subcellular location is the cytoplasm. Its function is as follows. May function as a system-specific chaperone protein essential for the assembly of an active dimethyl sulfide dehydrogenase DdhABC. This Rhodovulum sulfidophilum (Rhodobacter sulfidophilus) protein is Dimethyl sulfide dehydrogenase assembly chaperone protein (ddhD).